The primary structure comprises 332 residues: GTP 3',8-cyclase (332 aa).

A Radical SAM core domain is found at 9 to 220 (RFARKVDYLR…DQVRERIAER (212 aa)). Arg-18 contacts GTP. 2 residues coordinate [4Fe-4S] cluster: Cys-25 and Cys-29. Tyr-31 serves as a coordination point for S-adenosyl-L-methionine. Cys-32 contacts [4Fe-4S] cluster. Residue Arg-67 participates in GTP binding. Gly-71 contacts S-adenosyl-L-methionine. Thr-98 provides a ligand contact to GTP. Residue Ser-122 coordinates S-adenosyl-L-methionine. Lys-159 lines the GTP pocket. Met-193 contributes to the S-adenosyl-L-methionine binding site. Residues Cys-258 and Cys-261 each contribute to the [4Fe-4S] cluster site. 263–265 (RVR) contributes to the GTP binding site. Cys-275 serves as a coordination point for [4Fe-4S] cluster.

The protein belongs to the radical SAM superfamily. MoaA family. Monomer and homodimer. Requires [4Fe-4S] cluster as cofactor.

It catalyses the reaction GTP + AH2 + S-adenosyl-L-methionine = (8S)-3',8-cyclo-7,8-dihydroguanosine 5'-triphosphate + 5'-deoxyadenosine + L-methionine + A + H(+). It participates in cofactor biosynthesis; molybdopterin biosynthesis. Its function is as follows. Catalyzes the cyclization of GTP to (8S)-3',8-cyclo-7,8-dihydroguanosine 5'-triphosphate. In Pseudomonas syringae pv. syringae (strain B728a), this protein is GTP 3',8-cyclase.